A 198-amino-acid chain; its full sequence is Putative pseudouridine methyltransferase (198 aa).

Met-132 and Cys-186 together coordinate S-adenosyl-L-methionine.

The protein belongs to the methyltransferase superfamily. TrmY family.

The protein resides in the cytoplasm. The sequence is that of Putative pseudouridine methyltransferase from Shewanella baltica (strain OS185).